The following is a 528-amino-acid chain: MRLHLTFNHSTPATGRKNTKHTLFFGSMLACIISIISLVVPAYGANVSDEKKAKPFTHDNVIDLAMQLAQKPFKEARKAPKELIDLDYATYGKINYQENAAIWGGTPTKFSVQLFAPGFLYKNLVDIDVVENSRAFPIELTESSFSVPNDTIEKLLTQVGQYAGVRLHYPINDDEVKDEFIMFQGASYFRALSKGQTYGLSNRGLAIDVAQPKGEEYPLFKRFWIERPSKYQTAIVVHALLDSQSVTGAYRFGIYPGAPTRVDVDVTLFPRRDIAHVGLAPLTSMFLYGGLDTPDKPDYRPAVHNSEGLQIDRGNGERLWRPLNNPNKLQISAFGDEDIKGFGLIQRHRNFDYYQDLGANYQQRPSAWIEPLNDWGKGQLILLEIPSNAETNDNIVAYWEPQGGLKQAEPYRYSYRITASNDSPSFTNKARVIRSSKGQKQAKGKELLIDYSNIKPQDIEKITIDASISKGKILSSRIVAHPEINGARIFITFEPESTNVAELRIQLRKDEKPVAATWLYRWNSDDWP.

The N-terminal stretch at 1–44 is a signal peptide; that stretch reads MRLHLTFNHSTPATGRKNTKHTLFFGSMLACIISIISLVVPAYG.

It belongs to the OpgD/OpgG family.

The protein resides in the periplasm. It functions in the pathway glycan metabolism; osmoregulated periplasmic glucan (OPG) biosynthesis. Functionally, involved in the biosynthesis of osmoregulated periplasmic glucans (OPGs). This chain is Glucans biosynthesis protein G 2 (opgG2), found in Shewanella oneidensis (strain ATCC 700550 / JCM 31522 / CIP 106686 / LMG 19005 / NCIMB 14063 / MR-1).